Here is a 162-residue protein sequence, read N- to C-terminus: HTH-type transcriptional regulator IscR (162 aa).

The region spanning 2 to 131 (RLTSKGRYAV…NNITLGELVN (130 aa)) is the HTH rrf2-type domain. A DNA-binding region (H-T-H motif) is located at residues 28 to 51 (LADISERQGISLSYLEQLFSRLRK). Cys-92, Cys-98, and Cys-104 together coordinate [2Fe-2S] cluster. Residues 141–162 (RQHNEAHRPTRAQDAIDVKLRA) form a disordered region.

It depends on [2Fe-2S] cluster as a cofactor.

In terms of biological role, regulates the transcription of several operons and genes involved in the biogenesis of Fe-S clusters and Fe-S-containing proteins. This is HTH-type transcriptional regulator IscR from Cronobacter sakazakii (strain ATCC BAA-894) (Enterobacter sakazakii).